A 248-amino-acid polypeptide reads, in one-letter code: Triosephosphate isomerase (248 aa).

Substrate-binding residues include asparagine 10 and lysine 12. Catalysis depends on histidine 95, which acts as the Electrophile. The Proton acceptor role is filled by glutamate 165.

Belongs to the triosephosphate isomerase family. As to quaternary structure, homodimer.

The enzyme catalyses D-glyceraldehyde 3-phosphate = dihydroxyacetone phosphate. The protein operates within carbohydrate biosynthesis; gluconeogenesis. It participates in carbohydrate degradation; glycolysis; D-glyceraldehyde 3-phosphate from glycerone phosphate: step 1/1. The sequence is that of Triosephosphate isomerase (TPI1) from Kluyveromyces lactis (strain ATCC 8585 / CBS 2359 / DSM 70799 / NBRC 1267 / NRRL Y-1140 / WM37) (Yeast).